Consider the following 82-residue polypeptide: Small ribosomal subunit protein bS16 (82 aa).

The protein belongs to the bacterial ribosomal protein bS16 family.

This is Small ribosomal subunit protein bS16 from Desulfosudis oleivorans (strain DSM 6200 / JCM 39069 / Hxd3) (Desulfococcus oleovorans).